The following is a 492-amino-acid chain: E1B 55 kDa protein (492 aa).

Residues glutamate 22–arginine 112 form a disordered region. A compositionally biased stretch (low complexity) spans arginine 34 to serine 44. Serine 486 and serine 487 each carry phosphoserine. Position 491 is a phosphothreonine (threonine 491).

Belongs to the adenoviridae E1B 55 kDa protein family. In terms of assembly, interacts with host PML-4 and PML-5; this interaction promotes efficient subnuclear targeting of E1B-55K to PML nuclear bodies. Interacts with E4-ORF3 protein. Interacts with E4-ORF6 protein.

It is found in the host nucleus. It localises to the host cytoplasm. Its function is as follows. Plays a major role to prevent cellular inhibition of viral genome replication. Assembles an SCF-like E3 ubiquitin ligase complex based on the cellular proteins ELOB, ELOC, CUL5 and RBX1, in cooperation with viral E4orf6. This viral RING-type ligase ubiquitinates cellular substrates and targets them to proteasomal degradation: TP53/p53, LIG4, MRE11-RAD50-NBS1 (MRN) complex, ITGA3, DAXX and BLM. E1B-55K probably acts as the substrate-specific adapter of the SCF-like E3 ubiquitin ligase complex. Degradation of host TP53/p53 activity is essential for preventing E1A-induced TP53 accumulation that would otherwise lead to cell apoptosis and growth arrest. E1B-55K also inactivates TP53 transcription-factor activity by binding its transactivation domain. E1B-55K also functions as a SUMO1 E3 ligase for TP53 which causes the latter to be sequestered in promyelocytic leukemia (PML) nuclear bodies thereby contributing to maximal inhibition of TP53 function. This chain is E1B 55 kDa protein, found in Human adenovirus B serotype 7 (HAdV-7).